The following is a 69-amino-acid chain: UPF0337 protein RB0906 (69 aa).

This sequence belongs to the UPF0337 (CsbD) family.

The protein is UPF0337 protein RB0906 of Rhizobium meliloti (strain 1021) (Ensifer meliloti).